The chain runs to 388 residues: Mannitol-1-phosphate 5-dehydrogenase (388 aa).

Ala5–Gly16 contacts NAD(+). Residue Lys213 is part of the active site.

Belongs to the mannitol dehydrogenase family. As to quaternary structure, monomer.

The catalysed reaction is D-mannitol 1-phosphate + NAD(+) = beta-D-fructose 6-phosphate + NADH + H(+). Functionally, catalyzes the NAD(H)-dependent interconversion of D-fructose 6-phosphate and D-mannitol 1-phosphate in the mannitol metabolic pathway. In Aspergillus fumigatus (strain CBS 144.89 / FGSC A1163 / CEA10) (Neosartorya fumigata), this protein is Mannitol-1-phosphate 5-dehydrogenase (mpdA).